Reading from the N-terminus, the 271-residue chain is Structure-specific endonuclease subunit slx1 (271 aa).

The GIY-YIG domain occupies 5-87 (NFYCCYLLKS…QNLGISRYTK (83 aa)). An SLX1-type zinc finger spans residues 180–231 (CNLCYECIESDELRANCPFTDCNSINHLTCLASSFLTEECQVLPIEGMCTKC).

Belongs to the SLX1 family. Forms a heterodimer with slx4. It depends on Mg(2+) as a cofactor. Requires Mn(2+) as cofactor.

Its subcellular location is the nucleus. It is found in the nucleolus. Functionally, catalytic subunit of the slx1-slx4 structure-specific endonuclease that resolves DNA secondary structures generated during DNA repair and recombination. Has endonuclease activity towards branched DNA substrates, introducing single-strand cuts in duplex DNA close to junctions with ss-DNA. Has a preference for stem-loop (SL) and splayed arm Y structures. Introduces a single-strand cut in duplex DNA on the 3' side of a double-strand/single-strand junction with respect to the single-strand moving 3' to 5' away from the junction. Plays a critical role in maintaining the integrity of the ribosomal DNA (rDNA) loci, where it has a role in re-starting stalled replication forks. The complex initiates homologous recombination (HR) events, used to maintain rDNA copy number, in the rDNA repeats that are processed by a mechanism that requires rad22, but not rhp51. It is also required for suppression of methyl methanesulfonate (MMS) and UV-C irradiation hypersensitivity of the structural maintenance of chromosome (SMC) protein mutant, smc6-74, by overexpression of brc1. Has Holliday junction resolvase activity in vitro. The sequence is that of Structure-specific endonuclease subunit slx1 from Schizosaccharomyces pombe (strain 972 / ATCC 24843) (Fission yeast).